A 686-amino-acid polypeptide reads, in one-letter code: Delta-like protein 4 (686 aa).

Residues 1–27 (MTPGSRSACRWALLLLAVLWPQQRAAG) form the signal peptide. Topologically, residues 28-530 (SGIFQLRLQE…PVGLPPSFPW (503 aa)) are extracellular. 2 disulfides stabilise this stretch: C51-C55 and C62-C75. 3 N-linked (GlcNAc...) asparagine glycosylation sites follow: N79, N109, and N162. A DSL domain is found at 174-218 (VVCSDNYYGDSCSRLCKKRDDHFGHYECQPDGSLSCLPGWTGKYC). C176 and C185 are oxidised to a cystine. 2 interaction with Notch1 regions span residues 186 to 188 (SRL) and 192 to 196 (RDDHF). Disulfide bonds link C189-C201, C209-C218, C223-C234, C227-C240, C242-C251, C254-C265, C260-C271, C273-C282, C289-C301, C295-C311, C313-C322, C329-C340, C334-C349, C351-C360, C367-C378, C372-C389, C391-C400, C407-C418, C412-C427, C429-C438, C445-C456, C450-C465, C467-C476, C485-C496, C490-C507, and C509-C518. EGF-like domains lie at 219-252 (DQPI…PLCN), 256-283 (PHNG…LFCD), 285-323 (DLNY…EHCE), 325-361 (ELSK…QHCE), 363-401 (STLT…SNCE), 403-439 (KVDR…THCE), 441-477 (HISD…RRCE), and 481-519 (TNDA…SRCE). A helical transmembrane segment spans residues 531–551 (VAVSLGVGLVVLLVLLVMVAV). Residues 552–686 (AVRQLRLRRP…RNECVIATEV (135 aa)) lie on the Cytoplasmic side of the membrane.

Interacts with NOTCH4. Interacts (via N-terminal DSL and MNNL domains) with NOTCH1 (via EGF-like domains).

It is found in the cell membrane. In terms of biological role, involved in the Notch signaling pathway as Notch ligand. Activates NOTCH1 and NOTCH4. Involved in angiogenesis; negatively regulates endothelial cell proliferation and migration and angiogenic sprouting. Essential for retinal progenitor proliferation. Required for suppressing rod fates in late retinal progenitors as well as for proper generation of other retinal cell types. During spinal cord neurogenesis, inhibits V2a interneuron fate. The polypeptide is Delta-like protein 4 (Rattus norvegicus (Rat)).